The sequence spans 426 residues: Dihydroorotase (426 aa).

Zn(2+) is bound by residues H62 and H64. Substrate contacts are provided by residues 64 to 66 (HLR) and N96. D154, H181, and H234 together coordinate Zn(2+). N280 serves as a coordination point for substrate. Zn(2+) is bound at residue D307. The active site involves D307. Substrate is bound by residues H311 and 325–326 (FG).

The protein belongs to the metallo-dependent hydrolases superfamily. DHOase family. Class I DHOase subfamily. Requires Zn(2+) as cofactor.

It catalyses the reaction (S)-dihydroorotate + H2O = N-carbamoyl-L-aspartate + H(+). Its pathway is pyrimidine metabolism; UMP biosynthesis via de novo pathway; (S)-dihydroorotate from bicarbonate: step 3/3. Its function is as follows. Catalyzes the reversible cyclization of carbamoyl aspartate to dihydroorotate. The polypeptide is Dihydroorotase (Desulforapulum autotrophicum (strain ATCC 43914 / DSM 3382 / VKM B-1955 / HRM2) (Desulfobacterium autotrophicum)).